Reading from the N-terminus, the 365-residue chain is tRNA(Met) cytidine acetate ligase (365 aa).

ATP is bound by residues 7-20 (IAEFNPFHNGHKYL), glycine 96, asparagine 152, and arginine 175.

The protein belongs to the TmcAL family.

It localises to the cytoplasm. It catalyses the reaction cytidine(34) in elongator tRNA(Met) + acetate + ATP = N(4)-acetylcytidine(34) in elongator tRNA(Met) + AMP + diphosphate. Catalyzes the formation of N(4)-acetylcytidine (ac(4)C) at the wobble position of elongator tRNA(Met), using acetate and ATP as substrates. First activates an acetate ion to form acetyladenylate (Ac-AMP) and then transfers the acetyl group to tRNA to form ac(4)C34. In Streptococcus pneumoniae (strain Hungary19A-6), this protein is tRNA(Met) cytidine acetate ligase.